A 146-amino-acid polypeptide reads, in one-letter code: uncharacterized protein (146 aa).

Residues 7 to 27 (FVLSITIVLVILIIIAFIWYN) form a helical membrane-spanning segment.

Belongs to the asfivirus E146L family.

It is found in the host membrane. The protein resides in the virion. This is an uncharacterized protein from Ornithodoros (relapsing fever ticks).